Reading from the N-terminus, the 340-residue chain is Protein phosphatase PTC7 homolog fig (340 aa).

In terms of domain architecture, PPM-type phosphatase spans 58–314 (RAQAETIQAP…DDITVVLASV (257 aa)). Residues Asp90, Gly91, and Asp236 each contribute to the Mn(2+) site.

Belongs to the PP2C family. Requires Mg(2+) as cofactor. Mn(2+) is required as a cofactor.

The catalysed reaction is O-phospho-L-seryl-[protein] + H2O = L-seryl-[protein] + phosphate. It catalyses the reaction O-phospho-L-threonyl-[protein] + H2O = L-threonyl-[protein] + phosphate. The sequence is that of Protein phosphatase PTC7 homolog fig from Drosophila pseudoobscura pseudoobscura (Fruit fly).